We begin with the raw amino-acid sequence, 413 residues long: Calsequestrin-2 (413 aa).

The first 19 residues, 1–19 (MKRIYLLVVGLYLLSFSRA), serve as a signal peptide directing secretion. Y282 carries the phosphotyrosine modification. An N-linked (GlcNAc...) asparagine glycan is attached at N335. The interval 365–413 (VLSGKINTEDDDNEDEDDDGDNDNDDDDDDDDNSDEDNDDSDDDDDDDE) is disordered. The segment covering 373-413 (EDDDNEDEDDDGDNDNDDDDDDDDNSDEDNDDSDDDDDDDE) has biased composition (acidic residues). S398 and S405 each carry phosphoserine.

The protein belongs to the calsequestrin family. In terms of assembly, monomer, homodimer and homooligomer. Mostly monomeric in the absence of calcium. Forms higher oligomers in a calcium-dependent manner. Dimers associate to form tetramers, that then form linear homomer chains. Interacts with ASPH and TRDN. Post-translationally, phosphorylation in the C-terminus, probably by CK2, moderately increases calcium buffering capacity. N-glycosylated. As to expression, detected in stomach and vas deferens (at protein level).

It is found in the sarcoplasmic reticulum lumen. Calsequestrin is a high-capacity, moderate affinity, calcium-binding protein and thus acts as an internal calcium store in muscle. Calcium ions are bound by clusters of acidic residues at the protein surface, especially at the interface between subunits. Can bind around 60 Ca(2+) ions. Regulates the release of lumenal Ca(2+) via the calcium release channel RYR2; this plays an important role in triggering muscle contraction. Plays a role in excitation-contraction coupling in the heart and in regulating the rate of heart beats. The polypeptide is Calsequestrin-2 (Casq2) (Rattus norvegicus (Rat)).